We begin with the raw amino-acid sequence, 911 residues long: MVLVGQGMEPEEAFTKVQVVYYLSRGGQLQQPHLIDVPVSTHSNGLYLRDVKRRLTSIRGKGMGDSFSWSCKRNYKNNFIWQDLADDDKILPLSDGELVLKGSELYTGFQEKAEFMDGQFDPENASQLPNKIKKLASKKFDFEAVKRSLDMESDKLQEQSDLAAALSLSLQLMSDPHMKRFSKDKSMDLNQQVMNSLSQAKSNAAEECMLDHSVTDISSETLHSEESTVQKFSFNETIRERSKSTASASSSGTDREHSYGPPRKTESMGRERSLPRDLPRSREVSRELPPQVPREAPREKSREMSRELPREAPRELQLPREAPRELPREVPRETSRELPREAPREISRELPREGPREVAREQPREVVVPREVVREVSRELPRDVSRDSSKAVKDTAKTRQEKPEELPTIKTKKSPTCSESGDSTPFMLSPRRLMAALSSPSPEKKFGKLVHSSSTRSSTPSTSAASTQCEDSLPNINIRLAKQATCLSNFRLCGNANPHATDSRPDSPEHPLAAAAQPASGAVPQSPNTRGHQGGPYWPRWRSGRKPRTSSEGKEGPEPPTPPRGPMTKPVTVAKPDPPLKKSFEFDMNVSGVNSAMATPFLQTENNSPSSSESSSAAVSSGKKPASISLSGTSDASDGGNGASSTASSSSEVQNNVSVKEVITQQLPSPSSSEGRPSLNIDTASLPRVSISEAISDVRETVKTTRPDSPESPMKPNPPSSPVRTQLSSSPSFNKRIEDARARARSLVSKEIRSGESRSSKDLLKENDRVKTSSGSMRSGSTRTPNNKNGTTGAGSKTLSGTFNRSPPRINSIMWEDAPLTPTKKEFVNRDDRPLTAGRTNLDWEKTLQEAASLSLPPPDFGQILQECGQCGRTFKPDSLKVHMRGCHALRRSKDFQPFNGTSVAIRTRLQ.

A DIX-like oligomerization domain region spans residues 15 to 107 (TKVQVVYYLS…LVLKGSELYT (93 aa)). Disordered stretches follow at residues 219–470 (SETL…TQCE) and 492–810 (LCGN…PPRI). 2 stretches are compositionally biased toward basic and acidic residues: residues 253–286 (TDRE…EVSR) and 295–407 (EAPR…EELP). Positions 414-423 (SPTCSESGDS) are enriched in polar residues. Positions 452 to 467 (SSSTRSSTPSTSAAST) are enriched in low complexity. The short motif at 493-494 (CG) is the Association to cell membranes element. Over residues 511–527 (PLAAAAQPASGAVPQSP) the composition is skewed to low complexity. The span at 591–607 (SGVNSAMATPFLQTENN) shows a compositional bias: polar residues. A compositionally biased stretch (low complexity) spans 608-662 (SPSSSESSSAAVSSGKKPASISLSGTSDASDGGNGASSTASSSSEVQNNVSVKEV). Polar residues predominate over residues 663 to 683 (ITQQLPSPSSSEGRPSLNIDT). The span at 696–709 (SDVRETVKTTRPDS) shows a compositional bias: basic and acidic residues. Residues 722-733 (PVRTQLSSSPSF) show a composition bias toward polar residues. Positions 735–771 (KRIEDARARARSLVSKEIRSGESRSSKDLLKENDRVK) are enriched in basic and acidic residues. A compositionally biased stretch (low complexity) spans 772 to 784 (TSSGSMRSGSTRT). Polar residues predominate over residues 785–805 (PNNKNGTTGAGSKTLSGTFNR). The C2HC/C3H-type zinc-finger motif lies at 864–893 (ILQECGQCGRTFKPDSLKVHMRGCHALRRS). Zn(2+) contacts are provided by Cys-868, Cys-871, His-883, and Cys-887.

It belongs to the SOSEKI family. As to quaternary structure, homodimer. Forms long polymer filaments with other SOKs proteins polymers crucial for polar localization and biological activity. Zn(2+) serves as cofactor.

It localises to the cell membrane. Functionally, SOSEKI proteins locally interpret global polarity cues and can influence cell division orientation to coordinate cell polarization relative to body axes. This chain is Protein SOSEKI, found in Marchantia polymorpha (Common liverwort).